The sequence spans 205 residues: Holliday junction branch migration complex subunit RuvA (205 aa).

Residues 1–64 (MIGRLRGIIL…EDAQLLFGFN (64 aa)) are domain I. A domain II region spans residues 65–142 (DKQERALFRE…KGLSGDLFNP (78 aa)). Positions 143-156 (VSDIPLASPASAES) are flexible linker. The tract at residues 157–205 (RASDPEAEAAAALVALGYKPQEASRMISKIARPEADCETLIRDALRAAL) is domain III.

Belongs to the RuvA family. In terms of assembly, homotetramer. Forms an RuvA(8)-RuvB(12)-Holliday junction (HJ) complex. HJ DNA is sandwiched between 2 RuvA tetramers; dsDNA enters through RuvA and exits via RuvB. An RuvB hexamer assembles on each DNA strand where it exits the tetramer. Each RuvB hexamer is contacted by two RuvA subunits (via domain III) on 2 adjacent RuvB subunits; this complex drives branch migration. In the full resolvosome a probable DNA-RuvA(4)-RuvB(12)-RuvC(2) complex forms which resolves the HJ.

The protein localises to the cytoplasm. In terms of biological role, the RuvA-RuvB-RuvC complex processes Holliday junction (HJ) DNA during genetic recombination and DNA repair, while the RuvA-RuvB complex plays an important role in the rescue of blocked DNA replication forks via replication fork reversal (RFR). RuvA specifically binds to HJ cruciform DNA, conferring on it an open structure. The RuvB hexamer acts as an ATP-dependent pump, pulling dsDNA into and through the RuvAB complex. HJ branch migration allows RuvC to scan DNA until it finds its consensus sequence, where it cleaves and resolves the cruciform DNA. This is Holliday junction branch migration complex subunit RuvA from Pectobacterium carotovorum subsp. carotovorum (strain PC1).